Consider the following 715-residue polypeptide: ATP-dependent DNA helicase Hel308 (715 aa).

A Q motif motif is present at residues 1-29 (MKVGELNVSEKIKEILRERGIEELYPPQA). ATP contacts are provided by residues Gln28 and 46–53 (IPTASGKT). Positions 33-197 (TSGVLEGENL…WLNAKLIRSD (165 aa)) constitute a Helicase ATP-binding domain. Residues 145-148 (DEIH) carry the DEAH box motif. The Helicase C-terminal domain occupies 226–422 (WEELVYDAVK…ILRSQILALI (197 aa)).

The protein belongs to the helicase family. Hel308 subfamily. In terms of assembly, monomer.

The enzyme catalyses Couples ATP hydrolysis with the unwinding of duplex DNA by translocating in the 3'-5' direction.. It carries out the reaction ATP + H2O = ADP + phosphate + H(+). Functionally, DNA-dependent ATPase and 3'-5' DNA helicase that may be involved in repair of stalled replication forks. Rapidly unwinds double-stranded (ds)DNA with a 3'-overhang, has no strand reannealing capabilities. Binds single-stranded (ss)DNA, dsDNA with a 3'-overhang and ssRNA. In Pyrococcus abyssi (strain GE5 / Orsay), this protein is ATP-dependent DNA helicase Hel308.